The chain runs to 847 residues: Nitrite reductase (NADH) large subunit (847 aa).

An FAD-binding site is contributed by 44-79 (YDRVHLSSYFSHHTAEELSLVREGFYEKHGIKVLVG). 193-225 (LRRKIESMGVRVHTSKNTLEIVQEGVEARKTMR) provides a ligand contact to NAD(+). C425, C427, C459, and C462 together coordinate [2Fe-2S] cluster. C641, C647, C681, and C685 together coordinate [4Fe-4S] cluster. Position 685 (C685) interacts with siroheme.

The protein belongs to the nitrite and sulfite reductase 4Fe-4S domain family. As to quaternary structure, homodimer which associates with NirD. It depends on siroheme as a cofactor. The cofactor is [2Fe-2S] cluster. [4Fe-4S] cluster serves as cofactor. FAD is required as a cofactor.

It catalyses the reaction NH4(+) + 3 NAD(+) + 2 H2O = nitrite + 3 NADH + 5 H(+). It functions in the pathway nitrogen metabolism; nitrate reduction (assimilation). This is Nitrite reductase (NADH) large subunit (nirB) from Escherichia coli (strain K12).